The chain runs to 2663 residues: Ankyrin repeat domain-containing protein 11 (2663 aa).

Disordered regions lie at residues 1–90 (MPKG…KEPV) and 128–169 (SANS…ERGE). Basic and acidic residues-rich tracts occupy residues 21-54 (MVEK…VRER) and 69-90 (EQKD…KEPV). Over residues 128–155 (SANSPVDTTPKHPSQSTVCQKGTPNSAS) the composition is skewed to polar residues. The span at 156–169 (KTKDKVNKRNERGE) shows a compositional bias: basic and acidic residues. 4 ANK repeats span residues 167–196 (RGET…DVNV), 200–229 (AGWT…EVNT), 233–262 (DDDT…NPQQ), and 266–292 (KGET…YTSS). Ser-276 carries the post-translational modification Phosphoserine. 3 disordered regions span residues 289 to 380 (YTSS…SNSF), 398 to 647 (APKK…GQCS), and 723 to 783 (DTNK…NDLK). The segment covering 295–305 (SSTESSEEEDA) has biased composition (acidic residues). Over residues 309–320 (APSSSVDGNNTD) the composition is skewed to polar residues. The segment covering 356–376 (DRVPPVDDKHLLKKDYRKETK) has biased composition (basic and acidic residues). Position 408 is a phosphoserine (Ser-408). Thr-410 carries the phosphothreonine modification. Phosphoserine is present on Ser-411. Positions 438-451 (KTREPSNAKQQKEK) are enriched in basic and acidic residues. Positions 452 to 462 (NKVKKKRKKET) are enriched in basic residues. Residues 463 to 477 (KGREVRFGKRSDKFC) are compositionally biased toward basic and acidic residues. The segment covering 481–493 (SESESSESGEDDR) has biased composition (acidic residues). Residues 513–531 (SLFSSLSASSTSSHGSSAA) show a composition bias toward low complexity. The span at 539–550 (TDQHTKHWRTDN) shows a compositional bias: basic and acidic residues. Positions 551 to 562 (WKTISSPAWSEV) are enriched in polar residues. The span at 576–588 (ESDYSSEGSSVES) shows a compositional bias: low complexity. 2 stretches are compositionally biased toward basic residues: residues 591 to 602 (PVRKRQEHRKRA) and 629 to 641 (VKKH…HKNK). A Phosphoserine modification is found at Ser-834. 4 stretches are compositionally biased toward basic and acidic residues: residues 881 to 928 (VKED…EKHK), 935 to 1043 (SEKD…KSIL), 1059 to 1090 (KKDT…KEKA), and 1099 to 1112 (FSEK…KEKS). Disordered stretches follow at residues 881-1043 (VKED…KSIL) and 1059-1393 (KKDT…GQYE). Ser-1079 carries the phosphoserine modification. Thr-1120 carries the post-translational modification Phosphothreonine. The residue at position 1123 (Ser-1123) is a Phosphoserine. Basic and acidic residues-rich tracts occupy residues 1142 to 1301 (DLPR…DKIS), 1330 to 1347 (GDDK…LKEK), and 1359 to 1393 (KSHD…GQYE). At Thr-1419 the chain carries Phosphothreonine. Composition is skewed to basic and acidic residues over residues 1424-1446 (STEK…KELK), 1466-1545 (REKW…KGDP), 1556-1574 (APSK…KLLG), 1587-1597 (LSQKDLEIEER), and 1605-1639 (MKQM…DIPA). Residues 1424–1710 (STEKKDKNDS…TGVPTPTSVL (287 aa)) are disordered. Position 1509 is a phosphoserine (Ser-1509). A Phosphoserine modification is found at Ser-1692. Positions 1698-1710 (SRPTGVPTPTSVL) are enriched in polar residues. Position 1792 is a phosphoserine (Ser-1792). The segment at 1814-1836 (SVPAASSYDSPMPPSMEDRAPLP) is disordered. Phosphoserine is present on Ser-1847. Phosphotyrosine occurs at positions 1850 and 1851. 3 positions are modified to phosphoserine: Ser-1852, Ser-1859, and Ser-1990. Disordered regions lie at residues 1988 to 2019 (PESP…PAPP) and 2131 to 2406 (LDLG…STQQ). Low complexity-rich tracts occupy residues 2310–2324 (IQPE…AEAP) and 2391–2406 (RSTQ…STQQ). Residues 2369 to 2663 (AKARGSEDDD…VNDDFVLLPA (295 aa)) form an important for protein degradation region.

In terms of assembly, interacts with the PAS region of the p160 coactivators. Post-translationally, subject to proteasomal degradation which is probably essential to regulate its activity.

The protein localises to the nucleus. Chromatin regulator which modulates histone acetylation and gene expression in neural precursor cells. May recruit histone deacetylases (HDACs) to the p160 coactivators/nuclear receptor complex to inhibit ligand-dependent transactivation. Has a role in proliferation and development of cortical neural precursors. May also regulate bone homeostasis. The chain is Ankyrin repeat domain-containing protein 11 (ANKRD11) from Homo sapiens (Human).